Here is a 446-residue protein sequence, read N- to C-terminus: MSTFIGQLFGFAVIVYLVWRFIVPVVGRLMSARQDTVRQQLADAAAAADRLAEASQAHTKALEDAKSEAHRVVEEARTDAERIAEQLEAQADVEAERIKMQGARQVDLIRAQLTRQLRLELGHESVRQARELVRNHVADQAQQSATVDRFLDQLDAMAPATADVDYPLLAKMRSASRRALTSLVDWFGTMAQDLDHQGLTTLAGELVSVARLLDREAVVTRYLTVPAEDATPRIRLIERLVSGKVGAPTLEVLRTAVSKRWSANSDLIDAIEHVSRQALLELAERAGQVDEVEDQLFRFSRILDVQPRLAILLGDCAVPAEGRVRLLRKVLERADSTVNPVVVALLSHTVELLRGQAVEEAVLFLAEVAVARRGEIVAQVGAAAELSDAQRTRLTEVLSRIYGHPVTVQLHIDAALLGGLSIAVGDEVIDGTLSSRLAAAEARLPD.

Positions 1 to 168 (MSTFIGQLFG…PATADVDYPL (168 aa)) are ATP synthase subunit b. The helical transmembrane segment at 4-24 (FIGQLFGFAVIVYLVWRFIVP) threads the bilayer. Residues 169-446 (LAKMRSASRR…LAAAEARLPD (278 aa)) are ATP synthase subunit delta.

In the N-terminal section; belongs to the ATPase B chain family. The protein in the C-terminal section; belongs to the ATPase delta chain family. F-type ATPases have 2 components, F(1) - the catalytic core - and F(0) - the membrane proton channel. F(1) has five subunits: alpha(3), beta(3), gamma(1), delta(1), epsilon(1). F(0) has three main subunits: a(1), b(2) and c(10-14). The alpha and beta chains form an alternating ring which encloses part of the gamma chain. F(1) is attached to F(0) by a central stalk formed by the gamma and epsilon chains, while a peripheral stalk is formed by the delta and b chains.

The protein resides in the cell membrane. F(1)F(0) ATP synthase produces ATP from ADP in the presence of a proton or sodium gradient. F-type ATPases consist of two structural domains, F(1) containing the extramembraneous catalytic core and F(0) containing the membrane proton channel, linked together by a central stalk and a peripheral stalk. During catalysis, ATP synthesis in the catalytic domain of F(1) is coupled via a rotary mechanism of the central stalk subunits to proton translocation. Functionally, this fusion protein includes a component of the F(0) channel (subunit b) and of the F(1) subunit (subunit delta). Two copies of subunit b and one of delta together form the peripheral 'stator' stalk which links F(1) to F(0). The polypeptide is ATP synthase subunit b-delta (atpFH) (Mycobacterium tuberculosis (strain CDC 1551 / Oshkosh)).